Here is a 514-residue protein sequence, read N- to C-terminus: WD repeat-containing protein 26 (514 aa).

The region spanning 9 to 84 is the CTLH domain; the sequence is EHPSATKFRN…EYLEDGKVLE (76 aa). WD repeat units follow at residues 206–245, 252–291, 297–337, 377–416, 419–461, and 464–504; these read EHCN…HLLK, GHAY…GELR, SHED…DSWE, QEDH…LVRK, GVTQ…PIAE, and GHTR…DHQN.

As to quaternary structure, forms homooligomers. Identified in the CTLH complex that contains GID4, RANBP9 and/or RANBP10, MKLN1, MAEA, RMND5A (or alternatively its paralog RMND5B), GID8, ARMC8, WDR26 and YPEL5. Within this complex, MAEA, RMND5A (or alternatively its paralog RMND5B), GID8, WDR26, and RANBP9 and/or RANBP10 form the catalytic core, while GID4, MKLN1, ARMC8 and YPEL5 have ancillary roles. Interacts with DDB1-CUL4A/B E3 ligase complexes. Forms a complex composed of at least WDR26, a G-beta:gamma unit, and PLCB2. Interacts with AXIN1.

It localises to the cytoplasm. The protein localises to the nucleus. It is found in the mitochondrion. Functionally, G-beta-like protein involved in cell signal transduction. Acts as a negative regulator in MAPK signaling pathway. Functions as a scaffolding protein to promote G beta:gamma-mediated PLCB2 plasma membrane translocation and subsequent activation in leukocytes. Core component of the CTLH E3 ubiquitin-protein ligase complex that selectively accepts ubiquitin from UBE2H and mediates ubiquitination and subsequent proteasomal degradation of the transcription factor HBP1. Acts as a negative regulator of the canonical Wnt signaling pathway through preventing ubiquitination of beta-catenin CTNNB1 by the beta-catenin destruction complex, thus negatively regulating CTNNB1 degradation. Protects cells from oxidative stress-induced apoptosis via the down-regulation of AP-1 transcriptional activity as well as by inhibiting cytochrome c release from mitochondria. Also protects cells by promoting hypoxia-mediated autophagy and mitophagy. The polypeptide is WD repeat-containing protein 26 (Wdr26) (Rattus norvegicus (Rat)).